We begin with the raw amino-acid sequence, 240 residues long: UDP-2,3-diacylglucosamine hydrolase (240 aa).

5 residues coordinate Mn(2+): aspartate 8, histidine 10, aspartate 41, asparagine 79, and histidine 114. 79-80 (NR) contributes to the substrate binding site. Substrate contacts are provided by aspartate 122, serine 160, asparagine 164, lysine 167, and histidine 195. Residues histidine 195 and histidine 197 each contribute to the Mn(2+) site.

Belongs to the LpxH family. It depends on Mn(2+) as a cofactor.

Its subcellular location is the cell inner membrane. It carries out the reaction UDP-2-N,3-O-bis[(3R)-3-hydroxytetradecanoyl]-alpha-D-glucosamine + H2O = 2-N,3-O-bis[(3R)-3-hydroxytetradecanoyl]-alpha-D-glucosaminyl 1-phosphate + UMP + 2 H(+). It functions in the pathway glycolipid biosynthesis; lipid IV(A) biosynthesis; lipid IV(A) from (3R)-3-hydroxytetradecanoyl-[acyl-carrier-protein] and UDP-N-acetyl-alpha-D-glucosamine: step 4/6. Its function is as follows. Hydrolyzes the pyrophosphate bond of UDP-2,3-diacylglucosamine to yield 2,3-diacylglucosamine 1-phosphate (lipid X) and UMP by catalyzing the attack of water at the alpha-P atom. Involved in the biosynthesis of lipid A, a phosphorylated glycolipid that anchors the lipopolysaccharide to the outer membrane of the cell. The protein is UDP-2,3-diacylglucosamine hydrolase of Escherichia coli (strain SE11).